A 97-amino-acid chain; its full sequence is EVKLVESGGGLVKPGGSLKLSCAASGFTFSSYAMSWVRQTPEKRLEWVASISSGGSTYYPDSVKGRFTISRDNARNILYLQMSSLRSEDTAMYYCAR.

The Ig-like domain occupies 1–97 (EVKLVESGGG…EDTAMYYCAR (97 aa)).

The protein is Ig heavy chain V region 914 of Mus musculus (Mouse).